The chain runs to 505 residues: Deoxyguanosinetriphosphate triphosphohydrolase (505 aa).

The region spanning 66 to 273 (RLTHSMEVQQ…MEAADDISYC (208 aa)) is the HD domain.

It belongs to the dGTPase family. Type 1 subfamily. In terms of assembly, homotetramer. Mg(2+) serves as cofactor.

It catalyses the reaction dGTP + H2O = 2'-deoxyguanosine + triphosphate + H(+). Its function is as follows. dGTPase preferentially hydrolyzes dGTP over the other canonical NTPs. The sequence is that of Deoxyguanosinetriphosphate triphosphohydrolase from Escherichia coli O17:K52:H18 (strain UMN026 / ExPEC).